The following is a 157-amino-acid chain: 17.8 kDa class I heat shock protein (157 aa).

In terms of domain architecture, sHSP spans E43–G157.

It belongs to the small heat shock protein (HSP20) family. In terms of assembly, forms oligomeric structures.

It localises to the cytoplasm. The sequence is that of 17.8 kDa class I heat shock protein from Daucus carota (Wild carrot).